Here is a 20-residue protein sequence, read N- to C-terminus: Collagenolytic protease 36 kDa C (20 aa).

The region spanning 1–20 (IVGGSEATSGQFPYQXSFQD) is the Peptidase S1 domain. The interval 1–20 (IVGGSEATSGQFPYQXSFQD) is disordered.

The protein belongs to the peptidase S1 family.

The enzyme catalyses Hydrolysis of proteins, with broad specificity for peptide bonds. Native collagen is cleaved about 75% of the length of the molecule from the N-terminus. Low activity on small molecule substrates of both trypsin and chymotrypsin.. Its function is as follows. This enzyme is a serine protease capable of degrading the native triple helix of collagen. The chain is Collagenolytic protease 36 kDa C from Paralithodes camtschaticus (Red king crab).